The chain runs to 320 residues: Transcription termination/antitermination protein NusG (320 aa).

The protein belongs to the NusG family.

Participates in transcription elongation, termination and antitermination. This is Transcription termination/antitermination protein NusG from Mycoplasma pneumoniae (strain ATCC 29342 / M129 / Subtype 1) (Mycoplasmoides pneumoniae).